Reading from the N-terminus, the 200-residue chain is LHFPL tetraspan subfamily member 6 protein (200 aa).

The first 21 residues, 1-21, serve as a signal peptide directing secretion; the sequence is MASSLTCAGVIWALLSFLCAA. 2 helical membrane passes run 84-104 and 123-143; these read ICTVVTGIGCGLLLLVALTAI and GIQFVGGLLIGSGCALYPLGW. Asn-154 carries N-linked (GlcNAc...) asparagine glycosylation. Residues 172-192 traverse the membrane as a helical segment; sequence CTGAGAAAAMVLCTWMACFAG.

Belongs to the LHFP family.

The protein resides in the membrane. The chain is LHFPL tetraspan subfamily member 6 protein from Danio rerio (Zebrafish).